A 450-amino-acid chain; its full sequence is Bifunctional protein GlmU (450 aa).

Positions 1–226 (MLAVAVLAAG…PDEVNGINNR (226 aa)) are pyrophosphorylase. UDP-N-acetyl-alpha-D-glucosamine contacts are provided by residues 7–10 (LAAG), K21, Q73, and 78–79 (GT). Position 103 (D103) interacts with Mg(2+). Positions 140, 155, 170, and 224 each coordinate UDP-N-acetyl-alpha-D-glucosamine. N224 is a Mg(2+) binding site. The interval 227–247 (QQLAQCETMLQERLRHHWMAE) is linker. An N-acetyltransferase region spans residues 248–450 (GVTFVDPASC…IKENWAGPQG (203 aa)). UDP-N-acetyl-alpha-D-glucosamine is bound by residues R329 and K347. H359 serves as the catalytic Proton acceptor. 2 residues coordinate UDP-N-acetyl-alpha-D-glucosamine: Y362 and N373. Acetyl-CoA contacts are provided by residues A376, 382 to 383 (NY), A419, and R436.

In the N-terminal section; belongs to the N-acetylglucosamine-1-phosphate uridyltransferase family. This sequence in the C-terminal section; belongs to the transferase hexapeptide repeat family. Homotrimer. Requires Mg(2+) as cofactor.

The protein resides in the cytoplasm. The catalysed reaction is alpha-D-glucosamine 1-phosphate + acetyl-CoA = N-acetyl-alpha-D-glucosamine 1-phosphate + CoA + H(+). It catalyses the reaction N-acetyl-alpha-D-glucosamine 1-phosphate + UTP + H(+) = UDP-N-acetyl-alpha-D-glucosamine + diphosphate. It functions in the pathway nucleotide-sugar biosynthesis; UDP-N-acetyl-alpha-D-glucosamine biosynthesis; N-acetyl-alpha-D-glucosamine 1-phosphate from alpha-D-glucosamine 6-phosphate (route II): step 2/2. It participates in nucleotide-sugar biosynthesis; UDP-N-acetyl-alpha-D-glucosamine biosynthesis; UDP-N-acetyl-alpha-D-glucosamine from N-acetyl-alpha-D-glucosamine 1-phosphate: step 1/1. Its pathway is bacterial outer membrane biogenesis; LPS lipid A biosynthesis. Catalyzes the last two sequential reactions in the de novo biosynthetic pathway for UDP-N-acetylglucosamine (UDP-GlcNAc). The C-terminal domain catalyzes the transfer of acetyl group from acetyl coenzyme A to glucosamine-1-phosphate (GlcN-1-P) to produce N-acetylglucosamine-1-phosphate (GlcNAc-1-P), which is converted into UDP-GlcNAc by the transfer of uridine 5-monophosphate (from uridine 5-triphosphate), a reaction catalyzed by the N-terminal domain. The protein is Bifunctional protein GlmU of Synechococcus sp. (strain RCC307).